Here is a 402-residue protein sequence, read N- to C-terminus: NADH-quinone oxidoreductase subunit D (402 aa).

It belongs to the complex I 49 kDa subunit family. NDH-1 is composed of 14 different subunits. Subunits NuoB, C, D, E, F, and G constitute the peripheral sector of the complex.

The protein localises to the cell inner membrane. It catalyses the reaction a quinone + NADH + 5 H(+)(in) = a quinol + NAD(+) + 4 H(+)(out). NDH-1 shuttles electrons from NADH, via FMN and iron-sulfur (Fe-S) centers, to quinones in the respiratory chain. The immediate electron acceptor for the enzyme in this species is believed to be ubiquinone. Couples the redox reaction to proton translocation (for every two electrons transferred, four hydrogen ions are translocated across the cytoplasmic membrane), and thus conserves the redox energy in a proton gradient. In Nitrobacter winogradskyi (strain ATCC 25391 / DSM 10237 / CIP 104748 / NCIMB 11846 / Nb-255), this protein is NADH-quinone oxidoreductase subunit D.